We begin with the raw amino-acid sequence, 496 residues long: Fibronectin type III and SPRY domain-containing protein 1 (496 aa).

The stretch at 4 to 99 (QREALRKIIT…ALESSEELLE (96 aa)) forms a coiled coil. The COS domain maps to 105 to 162 (LQAMDREDFPQAAKQIKDGVTMAPAFRLSLKAKVSDNMSHLMVDFAQERQMLQALKFL). Residues 164 to 268 (VPSAPVIDLA…EPVTLETPAF (105 aa)) enclose the Fibronectin type-III domain. Residues 268 to 477 (FMFRLDASTS…VTTGLQVPSS (210 aa)) enclose the B30.2/SPRY domain. Positions 301–336 (KAREKDGKGRTASPINSPARGTPSPKRMPSGRGGRD) are disordered. Residues Arg310 and Arg320 each carry the omega-N-methylarginine modification.

As to quaternary structure, oligomerization is required for binding to microtubules.

The protein localises to the cytoplasm. It is found in the cytoskeleton. The protein resides in the microtubule organizing center. It localises to the centrosome. Its subcellular location is the nucleus. The protein localises to the cleavage furrow. May be involved in microtubule organization and stabilization. The chain is Fibronectin type III and SPRY domain-containing protein 1 (FSD1) from Macaca fascicularis (Crab-eating macaque).